Reading from the N-terminus, the 178-residue chain is Caveolin-1 (178 aa).

At Ser2 the chain carries N-acetylserine. Ser2 carries the post-translational modification Phosphoserine. The interval 2–94 is required for homooligomerization; sequence SGGKYVDSEG…WKASFTTFTV (93 aa). The Cytoplasmic portion of the chain corresponds to 2 to 104; it reads SGGKYVDSEG…TKYWFYRLLS (103 aa). N6-acetyllysine; alternate is present on Lys5. Lys5 participates in a covalent cross-link: Glycyl lysine isopeptide (Lys-Gly) (interchain with G-Cter in ubiquitin); alternate. Phosphotyrosine is present on Tyr6. Ser9 carries the post-translational modification Phosphoserine. At Tyr14 the chain carries Phosphotyrosine; by ABL1. Position 25 is a phosphotyrosine (Tyr25). Glycyl lysine isopeptide (Lys-Gly) (interchain with G-Cter in ubiquitin) cross-links involve residues Lys26, Lys39, Lys47, and Lys57. The segment at 82 to 94 is interaction with CAVIN3; it reads DGIWKASFTTFTV. The helical intramembrane region spans 105–125; sequence ALFGIPMALIWGIYFAILSFL. Over 126–178 the chain is Cytoplasmic; that stretch reads HIWAVVPCIKSFLIEIQCISRVYSIYVHTFCDPLFEAIGKIFSSIRINMQKEI. The interacts with SPRY1, SPRY2, SPRY3 and SPRY4 stretch occupies residues 131–142; it reads VPCIKSFLIEIQ. S-palmitoyl cysteine attachment occurs at residues Cys133, Cys143, and Cys156. Residues 149–160 are interacts with SPRY1, SPRY2, and SPRY4; sequence SIYVHTFCDPLF. Residues 167–178 form an interacts with SPRY1, SPRY2, SPRY3 and SPRY4 region; sequence FSSIRINMQKEI.

Belongs to the caveolin family. Homooligomer. Interacts with GLIPR2. Interacts with NOSTRIN. Interacts with SNAP25 and STX1A. Interacts (via the N-terminus) with DPP4; the interaction is direct. Interacts with CTNNB1, CDH1 and JUP. Interacts with PACSIN2; this interaction induces membrane tubulation. Interacts with SLC7A9. Interacts with BMX and BTK. Interacts with TGFBR1. Interacts with CAVIN3 (via leucine-zipper domain) in a cholesterol-sensitive manner. Interacts with CAVIN1. Interacts with EHD2 in a cholesterol-dependent manner. Forms a ternary complex with UBXN6 and VCP; mediates CAV1 targeting to lysosomes for degradation. Interacts with ABCG1; this interaction regulates ABCG1-mediated cholesterol efflux. Interacts with NEU3; this interaction enhances NEU3 sialidase activity within caveola. Interacts (via C-terminus) with SPRY1, SPRY2 (via C-terminus), SPRY3, and SPRY4. Interacts with IGFBP5; this interaction allows trafficking of IGFBP5 from the plasma membrane to the nucleus. In terms of processing, phosphorylated at Tyr-14 by ABL1 in response to oxidative stress. Ubiquitinated. Undergo monoubiquitination and multi- and/or polyubiquitination. Monoubiquitination of N-terminal lysines promotes integration in a ternary complex with UBXN6 and VCP which promotes oligomeric CAV1 targeting to lysosomes for degradation. Ubiquitinated by ZNRF1; leading to degradation and modulation of the TLR4-mediated immune response.

The protein localises to the golgi apparatus membrane. Its subcellular location is the cell membrane. It is found in the membrane. It localises to the caveola. The protein resides in the membrane raft. Its function is as follows. May act as a scaffolding protein within caveolar membranes. Forms a stable heterooligomeric complex with CAV2 that targets to lipid rafts and drives caveolae formation. Mediates the recruitment of CAVIN proteins (CAVIN1/2/3/4) to the caveolae. Interacts directly with G-protein alpha subunits and can functionally regulate their activity. Involved in the costimulatory signal essential for T-cell receptor (TCR)-mediated T-cell activation. Its binding to DPP4 induces T-cell proliferation and NF-kappa-B activation in a T-cell receptor/CD3-dependent manner. Recruits CTNNB1 to caveolar membranes and may regulate CTNNB1-mediated signaling through the Wnt pathway. Negatively regulates TGFB1-mediated activation of SMAD2/3 by mediating the internalization of TGFBR1 from membrane rafts leading to its subsequent degradation. Binds 20(S)-hydroxycholesterol (20(S)-OHC). This chain is Caveolin-1 (CAV1), found in Loxodonta africana (African elephant).